The chain runs to 487 residues: N-succinylglutamate 5-semialdehyde dehydrogenase (487 aa).

Residues 1–23 (MTHFIKGQWQAGKGHDVTSSNPA) form a disordered region. 220 to 225 (GSSRTG) serves as a coordination point for NAD(+). Residues E243 and C277 contribute to the active site.

It belongs to the aldehyde dehydrogenase family. AstD subfamily.

The enzyme catalyses N-succinyl-L-glutamate 5-semialdehyde + NAD(+) + H2O = N-succinyl-L-glutamate + NADH + 2 H(+). It functions in the pathway amino-acid degradation; L-arginine degradation via AST pathway; L-glutamate and succinate from L-arginine: step 4/5. Catalyzes the NAD-dependent reduction of succinylglutamate semialdehyde into succinylglutamate. This Shewanella sp. (strain ANA-3) protein is N-succinylglutamate 5-semialdehyde dehydrogenase.